The following is a 554-amino-acid chain: Calcium/calmodulin-dependent protein kinase type II delta 2 chain (554 aa).

Positions 13 to 271 (YQLFEELGKG…AAEAPKHPWI (259 aa)) constitute a Protein kinase domain. ATP contacts are provided by residues 19 to 27 (LGKGAFSVV) and K42. The active-site Proton acceptor is D135. T286 bears the Phosphothreonine mark. Residues S314 and S318 each carry the phosphoserine modification. 2 disordered regions span residues 324 to 375 (PDGV…TIED) and 392 to 413 (WQPSVGRPQNSEPKQAPNSSVQ). The segment covering 330-340 (NNKTNLASSPK) has biased composition (polar residues). A Phosphothreonine modification is found at T372.

Belongs to the protein kinase superfamily. CAMK Ser/Thr protein kinase family. CaMK subfamily. As to quaternary structure, CAMK2 is composed of four different chains: alpha, beta, gamma, and delta. The different isoforms assemble into homo- or heteromultimeric holoenzymes composed of 8 to 12 subunits. First detected at 18 hpf. At 24 hpf, expressed in discrete anterior locations and along either side of the midline. At 48 hpf, expression is predominantly in the forebrain, and then accumulates in the forebrain, hindbrain, and retinal epithelium at 72 hpf.

The catalysed reaction is L-seryl-[protein] + ATP = O-phospho-L-seryl-[protein] + ADP + H(+). It carries out the reaction L-threonyl-[protein] + ATP = O-phospho-L-threonyl-[protein] + ADP + H(+). With respect to regulation, autophosphorylation of CAMK2 plays an important role in the regulation of the kinase activity. CaM-kinase II (CAMK2) is a prominent kinase in the central nervous system. The polypeptide is Calcium/calmodulin-dependent protein kinase type II delta 2 chain (camk2d2) (Danio rerio (Zebrafish)).